A 643-amino-acid chain; its full sequence is MNANPKFLSADAHVDAAAVAPLPNSRKVYVTGSQPDIRVPMREITQADTPTGFGGEKNPPIYVYDTSGPYTDPDAKIDIRAGLPALRQRWIEARGDTEVLPGLSSQYGLERAADPATAELRFPGLHRNPRRAQAGKNVTQMHYARQGIITPEMEYIAIRENQRRAEYIESLKSSGPNGAKLAAMMGRQHPGQAFGAAAFGANALAEITPEFVRDEVARGRAIIPANINHPESEPMIIGRNFLVKINANIGNSAVTSSIGEEVDKMTWAIRWGGDTVMDLSTGKHIHETREWIIRNSPVPIGTVPIYQALEKVNGKAEDLTWEIFRDTLIEQAEQGVDYFTIHAGVRLQYVPLTANRMTGIVSRGGSIMAKWCLAHHKESFLYEHFEEICEIMKAYDVSFSLGDGLRPGSIYDANDEAQLGELKTLGELTQIAWKHDVQVMIEGPGHVPMQLIKENMDLQLDWCKEAPFYTLGPLTTDIAPGYDHITSGIGAAMIGWFGTAMLCYVTPKEHLGLPNKDDVKEGIITYKLAAHAADLAKGHPGAQVRDNALSKARFEFRWEDQFNIGLDPDKAREFHDETLPKDSAKVAHFCSMCGPHFCSMKITQDVREFAAQQGVSETEALKKGMEVKAVEFVKTGAEIYHRQ.

Substrate-binding positions include Asn-248, Met-277, Tyr-306, His-342, 362–364 (SRG), 403–406 (DGLR), and Glu-442. Residue His-446 coordinates Zn(2+). Tyr-469 is a binding site for substrate. Residue His-510 participates in Zn(2+) binding. 3 residues coordinate [4Fe-4S] cluster: Cys-590, Cys-593, and Cys-598.

This sequence belongs to the ThiC family. Homodimer. The cofactor is [4Fe-4S] cluster.

It carries out the reaction 5-amino-1-(5-phospho-beta-D-ribosyl)imidazole + S-adenosyl-L-methionine = 4-amino-2-methyl-5-(phosphooxymethyl)pyrimidine + CO + 5'-deoxyadenosine + formate + L-methionine + 3 H(+). It participates in cofactor biosynthesis; thiamine diphosphate biosynthesis. In terms of biological role, catalyzes the synthesis of the hydroxymethylpyrimidine phosphate (HMP-P) moiety of thiamine from aminoimidazole ribotide (AIR) in a radical S-adenosyl-L-methionine (SAM)-dependent reaction. The sequence is that of Phosphomethylpyrimidine synthase from Burkholderia cenocepacia (strain ATCC BAA-245 / DSM 16553 / LMG 16656 / NCTC 13227 / J2315 / CF5610) (Burkholderia cepacia (strain J2315)).